Reading from the N-terminus, the 500-residue chain is Phosphatidylserine decarboxylase proenzyme 1, mitochondrial (500 aa).

The transit peptide at 1–48 (MSIMPVKNALAQGRTLLMGRMPAVKFSTRMQLRNRTAVLWNRKFSTRL) directs the protein to the mitochondrion; not cleaved when targeted to the endoplasmic reticulum. Asn34 is a glycosylation site (N-linked (GlcNAc...) asparagine). Residues 45–79 (STRLFVQQRRSSGEIVDRAKAAAANSGRKQVSMKW) lie on the Mitochondrial matrix side of the membrane. The enables targeting to the endoplasmic reticulum in addition to mitochondria stretch occupies residues 57–101 (GEIVDRAKAAAANSGRKQVSMKWVVLTSFTIVLGTILLVSRNDST). The chain crosses the membrane as a helical span at residues 80–98 (VVLTSFTIVLGTILLVSRN). At 99-500 (DSTEEDATEG…LGIIGKNDLK (402 aa)) the chain is on the mitochondrial intermembrane side. Active-site charge relay system; for autoendoproteolytic cleavage activity residues include Asp210, His348, and Ser463. The active-site Schiff-base intermediate with substrate; via pyruvic acid; for decarboxylase activity is Ser463. Ser463 bears the Pyruvic acid (Ser); by autocatalysis mark. Positions 475-492 (FKFDVRVGDKVKMGQKLG) are required for processing and stability.

This sequence belongs to the phosphatidylserine decarboxylase family. PSD-B subfamily. Eukaryotic type I sub-subfamily. Heterodimer of a large membrane-associated beta subunit and a small pyruvoyl-containing alpha subunit. Pyruvate is required as a cofactor. Glycosylated at Asn-34 in the endoplasmic reticulum. Post-translationally, the precursor is imported via the TOM complex into mitochondria, where the N-terminal presequence is cleaved by the matrix-located proteases MPP (MAS1-MAS2) and OCT1. In terms of processing, is synthesized initially as an inactive proenzyme. Formation of the active enzyme involves a self-maturation process in which the active site pyruvoyl group is generated from an internal serine residue via an autocatalytic post-translational modification. Two non-identical subunits are generated from the proenzyme in this reaction, and the pyruvate is formed at the N-terminus of the alpha chain, which is derived from the carboxyl end of the proenzyme. The autoendoproteolytic cleavage occurs by a canonical serine protease mechanism, in which the side chain hydroxyl group of the serine supplies its oxygen atom to form the C-terminus of the beta chain, while the remainder of the serine residue undergoes an oxidative deamination to produce ammonia and the pyruvoyl prosthetic group on the alpha chain. During this reaction, the Ser that is part of the protease active site of the proenzyme becomes the pyruvoyl prosthetic group, which constitutes an essential element of the active site of the mature decarboxylase.

It is found in the mitochondrion inner membrane. The protein resides in the lipid droplet. It localises to the endoplasmic reticulum membrane. It catalyses the reaction a 1,2-diacyl-sn-glycero-3-phospho-L-serine + H(+) = a 1,2-diacyl-sn-glycero-3-phosphoethanolamine + CO2. It participates in phospholipid metabolism; phosphatidylethanolamine biosynthesis; phosphatidylethanolamine from CDP-diacylglycerol: step 2/2. In terms of biological role, catalyzes the formation of phosphatidylethanolamine (PtdEtn) from phosphatidylserine (PtdSer). Plays a central role in phospholipid metabolism and in the interorganelle trafficking of phosphatidylserine. Phosphatidylethanolamine formed in the mitochondria is exported to other membranes to fullfill their requirements for PtdEtn. Required for normal mitochondrial morphology and proper mitochondrial fusion during yeast mating. Involved in lipid droplet biogenesis at the endoplasmic reticulum membrane. Required for induction of mitophagy during nitrogen starvation. Appears to play a specific role in supporting respiratory complex III activity. This chain is Phosphatidylserine decarboxylase proenzyme 1, mitochondrial, found in Saccharomyces cerevisiae (strain ATCC 204508 / S288c) (Baker's yeast).